The following is a 65-amino-acid chain: Large ribosomal subunit protein bL35 (65 aa).

The disordered stretch occupies residues 1–26 (MPKMKTHRGAAKRFRKTGTGKLKRGK).

This sequence belongs to the bacterial ribosomal protein bL35 family.

The polypeptide is Large ribosomal subunit protein bL35 (Clostridium beijerinckii (strain ATCC 51743 / NCIMB 8052) (Clostridium acetobutylicum)).